The following is a 771-amino-acid chain: Rho GTPase-activating protein 26 (771 aa).

One can recognise a BAR domain in the interval 7 to 262 (EFSDCYLDSP…MKENPHEHLA (256 aa)). A PH domain is found at 265-369 (PFTMEGYLYV…WMEAMDGREP (105 aa)). The 186-residue stretch at 383–568 (AQLDNIGFSI…IIIENYEEMF (186 aa)) folds into the Rho-GAP domain. A disordered region spans residues 575–712 (PQTNSQLHLS…SSTSSDSSPV (138 aa)). Basic and acidic residues predominate over residues 608-617 (HSSEKEEKRN). Residues 618–637 (SVNSSAESVSSSNANSSVNS) are compositionally biased toward low complexity. Polar residues-rich tracts occupy residues 638–650 (TCTQRSNMNNLNA) and 662–671 (RPNSLLNPKN). Low complexity-rich tracts occupy residues 673–683 (SGLLPSSLNPS) and 691–712 (PMVSAPSSPMPTSSTSSDSSPV). One can recognise an SH3 domain in the interval 713–771 (SVPRKAKALYACKAEHDSELSFSAGTVFENVCPSQEPGWLEGTLNGKTGLIPENYVEFL).

Its subcellular location is the cell junction. The protein resides in the focal adhesion. It is found in the cytoplasm. The protein localises to the cytoskeleton. It localises to the endosome membrane. GTPase-activating protein for rhoa and cdc42. May be involved in the regulation of neosynthesized protein export through a Rab-endososomal dependent export route. This is Rho GTPase-activating protein 26 (arhgap26) from Xenopus laevis (African clawed frog).